Reading from the N-terminus, the 210-residue chain is Uridine kinase (210 aa).

An ATP-binding site is contributed by 13 to 20; it reads GGSGSGKT.

This sequence belongs to the uridine kinase family.

Its subcellular location is the cytoplasm. The catalysed reaction is uridine + ATP = UMP + ADP + H(+). It carries out the reaction cytidine + ATP = CMP + ADP + H(+). It functions in the pathway pyrimidine metabolism; CTP biosynthesis via salvage pathway; CTP from cytidine: step 1/3. It participates in pyrimidine metabolism; UMP biosynthesis via salvage pathway; UMP from uridine: step 1/1. This is Uridine kinase from Oceanobacillus iheyensis (strain DSM 14371 / CIP 107618 / JCM 11309 / KCTC 3954 / HTE831).